The chain runs to 402 residues: Tryptophan synthase beta chain (402 aa).

Position 92 is an N6-(pyridoxal phosphate)lysine (Lys-92).

This sequence belongs to the TrpB family. Tetramer of two alpha and two beta chains. Pyridoxal 5'-phosphate serves as cofactor.

The enzyme catalyses (1S,2R)-1-C-(indol-3-yl)glycerol 3-phosphate + L-serine = D-glyceraldehyde 3-phosphate + L-tryptophan + H2O. It functions in the pathway amino-acid biosynthesis; L-tryptophan biosynthesis; L-tryptophan from chorismate: step 5/5. In terms of biological role, the beta subunit is responsible for the synthesis of L-tryptophan from indole and L-serine. This Staphylococcus epidermidis (strain ATCC 35984 / DSM 28319 / BCRC 17069 / CCUG 31568 / BM 3577 / RP62A) protein is Tryptophan synthase beta chain.